Reading from the N-terminus, the 242-residue chain is Terpene cyclase cle7 (242 aa).

The next 7 helical transmembrane spans lie at 20 to 40 (LLLT…ITTI), 50 to 69 (GVSL…FAIL), 79 to 101 (VILR…FARS), 117 to 137 (LFVL…SVLL), 143 to 163 (FYWS…GILV), 172 to 192 (SYGM…SLFL), and 207 to 227 (ILMR…GVCF).

Belongs to the paxB family.

The protein localises to the membrane. It participates in secondary metabolite biosynthesis; terpenoid biosynthesis. In terms of biological role, non-reducing polyketide synthase; part of the cluster A that mediates the biosynthesis of chevalone E and its oxidized derivatives that possess a unique five-membered lactone ring and can synergistically enhance the cytotoxicity of doxorubicin (DOX) in breast cancer cells. Within the pathway, cle7 takes part to the biosynthesis of the molecular scaffold by catalyzing the cyclization of the prenyl group initiated by protonation and ring-opening of the epoxide to produce the chevalone E intermediate. The molecular scaffold is commonly biosynthesized by a series of enzymes including the non-reducing polyketide synthase (NR-PKS) cle1 that produces the alpha-pyrone triacetic acid lactone (TAL); The membrane-bound prenyltransferase cle5 that accepts TAL as its substrate to perform a C-3 geranylgeranylation reaction, in which the pathway-dedicated GGPS cle6 is required to provide GGPP, the other substrate of cle5; the FAD-dependent monooxygenase Cle3 that forms an (S)-epoxide ring at the terminal olefin of the geranylgeranyl group; and the terpene cyclase Cle7 that catalyzes the cyclization of the prenyl group that yields the pentacyclic pathway intermediate chevalone E. Chevalone E can derivatize into seven new oxidized analogs by the cytochrome P450 monooxygenases cle2 (acting at C-20) and cle4 (acting at C-11 and C-12). This chain is Terpene cyclase cle7, found in Aspergillus versicolor.